Consider the following 73-residue polypeptide: Large ribosomal subunit protein uL29 (73 aa).

The protein belongs to the universal ribosomal protein uL29 family.

In Synechocystis sp. (strain ATCC 27184 / PCC 6803 / Kazusa), this protein is Large ribosomal subunit protein uL29 (rpmC).